The sequence spans 334 residues: MIDFSNFYQLIAKSPLSHWLETLPAQVAAWQREALHGKFREWERAVEFLPELTPWRLDLLHSVTAESETPLSEGHQLRVENLLKNLMPWRKGPYSLYGINIDTEWRSDWKWERVLPHLSDLTGRTILDVGCGSGYHMWRMIGAGAHLAVGIDPTQLFLCQFEAVRKLLGNDQRAHLLPLGIEQLPALEAFDTVFSMGVLYHRRSPLDHLWQLKDQLAPGGELVLETLVVEGDENTVLVPGDRYAQMRNVYFIPSAAALKMWLEKCGFIDVRIVDACVTSTDEQRRTEWMTSESLADFLDPQDQRKTVEGYPAPLRAVIIATKPETQQSLAKKAR.

Residues Lys-91, Trp-105, Lys-110, Gly-130, 152 to 154 (DPT), 181 to 182 (IE), Met-196, Tyr-200, and Arg-315 each bind carboxy-S-adenosyl-L-methionine.

It belongs to the class I-like SAM-binding methyltransferase superfamily. CmoB family. Homotetramer.

It catalyses the reaction carboxy-S-adenosyl-L-methionine + 5-hydroxyuridine(34) in tRNA = 5-carboxymethoxyuridine(34) in tRNA + S-adenosyl-L-homocysteine + H(+). Its function is as follows. Catalyzes carboxymethyl transfer from carboxy-S-adenosyl-L-methionine (Cx-SAM) to 5-hydroxyuridine (ho5U) to form 5-carboxymethoxyuridine (cmo5U) at position 34 in tRNAs. This Klebsiella pneumoniae (strain 342) protein is tRNA U34 carboxymethyltransferase.